The following is a 261-amino-acid chain: Cytochrome c oxidase subunit 3 (261 aa).

At 1–15 (MAHQAHAYHMVDPSP) the chain is on the mitochondrial matrix side. A helical membrane pass occupies residues 16–34 (WPLTGAVAALLLTSGLAIW). Over 35–40 (FPFNSL) the chain is Mitochondrial intermembrane. The chain crosses the membrane as a helical span at residues 41–66 (ILLTLGLVLLLLTMYQWWRDIVREGT). The Mitochondrial matrix portion of the chain corresponds to 67–72 (FQGHHT). The chain crosses the membrane as a helical span at residues 73–105 (PPVQKGLRYGMILFITSEVFFFLGFFWAFYHSS). Over 106–128 (LAPTPELGGCWPPTGIVPLNPFE) the chain is Mitochondrial intermembrane. Residues 129–152 (VPLLNTAVLLASGVTVTWAHHSIM) form a helical membrane-spanning segment. The Mitochondrial matrix portion of the chain corresponds to 153-155 (EGE). The helical transmembrane segment at 156–183 (RKQAIHSLTLTILLGFYFTFLQAMEYYE) threads the bilayer. Over 184–190 (APFTIAD) the chain is Mitochondrial intermembrane. Residues 191–223 (GVYGSTFFVATGFHGLHVIIGSTFLAICLLRQI) traverse the membrane as a helical segment. Topologically, residues 224-232 (RYHFTSEHH) are mitochondrial matrix. The chain crosses the membrane as a helical span at residues 233 to 256 (FGFEAAAWYWHFVDVVWLFLYISI). Residues 257–261 (YWWGS) lie on the Mitochondrial intermembrane side of the membrane.

The protein belongs to the cytochrome c oxidase subunit 3 family. Component of the cytochrome c oxidase (complex IV, CIV), a multisubunit enzyme composed of 14 subunits. The complex is composed of a catalytic core of 3 subunits MT-CO1, MT-CO2 and MT-CO3, encoded in the mitochondrial DNA, and 11 supernumerary subunits COX4I, COX5A, COX5B, COX6A, COX6B, COX6C, COX7A, COX7B, COX7C, COX8 and NDUFA4, which are encoded in the nuclear genome. The complex exists as a monomer or a dimer and forms supercomplexes (SCs) in the inner mitochondrial membrane with NADH-ubiquinone oxidoreductase (complex I, CI) and ubiquinol-cytochrome c oxidoreductase (cytochrome b-c1 complex, complex III, CIII), resulting in different assemblies (supercomplex SCI(1)III(2)IV(1) and megacomplex MCI(2)III(2)IV(2)).

It localises to the mitochondrion inner membrane. The enzyme catalyses 4 Fe(II)-[cytochrome c] + O2 + 8 H(+)(in) = 4 Fe(III)-[cytochrome c] + 2 H2O + 4 H(+)(out). Functionally, component of the cytochrome c oxidase, the last enzyme in the mitochondrial electron transport chain which drives oxidative phosphorylation. The respiratory chain contains 3 multisubunit complexes succinate dehydrogenase (complex II, CII), ubiquinol-cytochrome c oxidoreductase (cytochrome b-c1 complex, complex III, CIII) and cytochrome c oxidase (complex IV, CIV), that cooperate to transfer electrons derived from NADH and succinate to molecular oxygen, creating an electrochemical gradient over the inner membrane that drives transmembrane transport and the ATP synthase. Cytochrome c oxidase is the component of the respiratory chain that catalyzes the reduction of oxygen to water. Electrons originating from reduced cytochrome c in the intermembrane space (IMS) are transferred via the dinuclear copper A center (CU(A)) of subunit 2 and heme A of subunit 1 to the active site in subunit 1, a binuclear center (BNC) formed by heme A3 and copper B (CU(B)). The BNC reduces molecular oxygen to 2 water molecules using 4 electrons from cytochrome c in the IMS and 4 protons from the mitochondrial matrix. This Tetraodon nigroviridis (Spotted green pufferfish) protein is Cytochrome c oxidase subunit 3 (mt-co3).